The primary structure comprises 189 residues: uncharacterized protein (189 aa).

The N-terminal stretch at 1–20 (MKFSTVGFLFSTILFKSAFA) is a signal peptide. One can recognise an EF-hand domain in the interval 74–109 (KKNEVLVDVLKKCDPSGNRRITLDEFLAFRKNGGEL). Ca(2+)-binding residues include Asp-87, Ser-89, Asn-91, Arg-93, and Glu-98.

Its subcellular location is the endoplasmic reticulum lumen. It localises to the golgi apparatus lumen. This is an uncharacterized protein from Schizosaccharomyces pombe (strain 972 / ATCC 24843) (Fission yeast).